A 332-amino-acid chain; its full sequence is MAAVFLVTLYEYSPLFYIAVVFTCFIVTTGLVLGWFGWDVPVILRNSEETQFSTRVFKKQMRQVKNPFGLEITNPSSASITTGITLTTDCLEDSLLTCYWGCSVQKLYEALQKHVYCFRISTPQALEDALYSEYLYQEQYFIKKDSKEEIYCQLPRDTKIEDFGTVPRSRYPLVALLTLADEDDREIYDIISMVSVIHIPDRTYKLSCRILYQYLLLAQGQFHDLKQLFMSANNNFTPSNNSSSEEKNTDRSLLEKVGLSESEVEPSEENSKDCVVCQNGTVNWVLLPCRHTCLCDGCVKYFQQCPMCRQFVQESFALCSQKEQDKDKPKTL.

The RING-type zinc finger occupies 274-309 (CVVCQNGTVNWVLLPCRHTCLCDGCVKYFQQCPMCR).

Ubiquitously expressed with high expression in testis and the cerebellum.

It localises to the nucleus. It is found in the endoplasmic reticulum. Its function is as follows. Able to inhibit growth in several cell lines. In Homo sapiens (Human), this protein is Cell growth regulator with RING finger domain protein 1 (CGRRF1).